The primary structure comprises 574 residues: Isocitrate dehydrogenase kinase/phosphatase (574 aa).

Residues Ala-315–Met-321 and Lys-336 each bind ATP. The active site involves Asp-371.

It belongs to the AceK family.

It localises to the cytoplasm. The catalysed reaction is L-seryl-[isocitrate dehydrogenase] + ATP = O-phospho-L-seryl-[isocitrate dehydrogenase] + ADP + H(+). Functionally, bifunctional enzyme which can phosphorylate or dephosphorylate isocitrate dehydrogenase (IDH) on a specific serine residue. This is a regulatory mechanism which enables bacteria to bypass the Krebs cycle via the glyoxylate shunt in response to the source of carbon. When bacteria are grown on glucose, IDH is fully active and unphosphorylated, but when grown on acetate or ethanol, the activity of IDH declines drastically concomitant with its phosphorylation. This is Isocitrate dehydrogenase kinase/phosphatase from Escherichia coli (strain SMS-3-5 / SECEC).